Reading from the N-terminus, the 167-residue chain is NAD(P)H-quinone oxidoreductase subunit I, chloroplastic (167 aa).

2 4Fe-4S ferredoxin-type domains span residues 55–84 (GRIHFEFDKCIACEVCVRVCPINLPVVDWI) and 95–124 (KNYSIDFGVCIFCGNCVEYCPTNCLSMTEE). [4Fe-4S] cluster is bound by residues Cys64, Cys67, Cys70, Cys74, Cys104, Cys107, Cys110, and Cys114.

Belongs to the complex I 23 kDa subunit family. As to quaternary structure, NDH is composed of at least 16 different subunits, 5 of which are encoded in the nucleus. [4Fe-4S] cluster serves as cofactor.

The protein localises to the plastid. It is found in the chloroplast thylakoid membrane. The catalysed reaction is a plastoquinone + NADH + (n+1) H(+)(in) = a plastoquinol + NAD(+) + n H(+)(out). It carries out the reaction a plastoquinone + NADPH + (n+1) H(+)(in) = a plastoquinol + NADP(+) + n H(+)(out). NDH shuttles electrons from NAD(P)H:plastoquinone, via FMN and iron-sulfur (Fe-S) centers, to quinones in the photosynthetic chain and possibly in a chloroplast respiratory chain. The immediate electron acceptor for the enzyme in this species is believed to be plastoquinone. Couples the redox reaction to proton translocation, and thus conserves the redox energy in a proton gradient. The chain is NAD(P)H-quinone oxidoreductase subunit I, chloroplastic from Adiantum capillus-veneris (Maidenhair fern).